The following is a 248-amino-acid chain: Large ribosomal subunit protein uL30 (248 aa).

N-acetylmethionine is present on Met-1. 4 tandem repeats follow at residues 7–18 (KKKEVPAVPETL), 19–30 (KKKRRNFAELKI), 31–42 (KRLRKKFAQKML), and 43–54 (RKARRKLIYEKA). The interval 7 to 54 (KKKEVPAVPETLKKKRRNFAELKIKRLRKKFAQKMLRKARRKLIYEKA) is 4 X 12 AA tandem repeats. The residue at position 17 (Thr-17) is a Phosphothreonine. An N6-acetyllysine modification is found at Lys-124. At Lys-127 the chain carries N6-succinyllysine. Tyr-139 bears the Phosphotyrosine mark.

The protein belongs to the universal ribosomal protein uL30 family. In terms of assembly, component of the large ribosomal subunit. Homodimer. Interacts with DHX33.

It is found in the cytoplasm. Functionally, component of the large ribosomal subunit. The ribosome is a large ribonucleoprotein complex responsible for the synthesis of proteins in the cell. Binds to G-rich structures in 28S rRNA and in mRNAs. Plays a regulatory role in the translation apparatus; inhibits cell-free translation of mRNAs. The protein is Large ribosomal subunit protein uL30 (RPL7) of Homo sapiens (Human).